The sequence spans 621 residues: 5-aminolevulinate synthase, mitochondrial (621 aa).

The disordered stretch occupies residues 76 to 95 (DAKGSLAGRPVHHKAATEST). Residues Arg122 and Ser234 each coordinate substrate. Positions 286, 314, and 359 each coordinate pyridoxal 5'-phosphate. Residue Lys362 is part of the active site. N6-(pyridoxal phosphate)lysine is present on Lys362. Thr391 and Thr392 together coordinate pyridoxal 5'-phosphate. A substrate-binding site is contributed by Thr477.

This sequence belongs to the class-II pyridoxal-phosphate-dependent aminotransferase family. As to quaternary structure, homodimer. It depends on pyridoxal 5'-phosphate as a cofactor.

It localises to the mitochondrion matrix. It carries out the reaction succinyl-CoA + glycine + H(+) = 5-aminolevulinate + CO2 + CoA. The protein operates within porphyrin-containing compound metabolism; protoporphyrin-IX biosynthesis; 5-aminolevulinate from glycine: step 1/1. Its function is as follows. Catalyzes the synthesis of 5-aminolevulinate (ALA) from succinyl-CoA and glycine, the first and rate-limiting step in heme biosynthesis. The polypeptide is 5-aminolevulinate synthase, mitochondrial (hem1) (Agaricus bisporus (White button mushroom)).